Consider the following 216-residue polypeptide: MTIRNYNYHMTHFVISAPDIRHLPRDEGIEVAFAGRSNAGKSSALNTLTNQKGLARTSKTPGRTQLINLFEVVDGVRLVDLPGYGYAEVPEEMKLKWQRALGEYLQKRNCLKGLVVLMDIRHPLKDLDQQMITWAVAVGTPVLLLLTKADKLASGARKAQLNLVREAIIPFMGDIQVEAFSSLKKIGVDKLREKLDTWFSEIPPEVMAEEFDGEGE.

The region spanning 27–201 (EGIEVAFAGR…REKLDTWFSE (175 aa)) is the EngB-type G domain. GTP contacts are provided by residues 35 to 42 (GRSNAGKS), 62 to 66 (GRTQL), 80 to 83 (DLPG), 147 to 150 (TKAD), and 180 to 182 (FSS). Mg(2+) contacts are provided by serine 42 and threonine 64.

It belongs to the TRAFAC class TrmE-Era-EngA-EngB-Septin-like GTPase superfamily. EngB GTPase family. It depends on Mg(2+) as a cofactor.

In terms of biological role, necessary for normal cell division and for the maintenance of normal septation. In Yersinia pseudotuberculosis serotype O:1b (strain IP 31758), this protein is Probable GTP-binding protein EngB.